Reading from the N-terminus, the 231-residue chain is S-norcoclaurine synthase 1 (231 aa).

107 to 109 (YKE) is a binding site for dopamine. Residue K121 is the Proton donor of the active site. Residue D140 participates in (4-hydroxyphenyl)acetaldehyde binding. Residues 210 to 230 (LLLCLIICLVIAGGMFVAGVP) form a helical membrane-spanning segment.

The protein belongs to the BetVI family. Detected in roots, stems, leaves, flower buds and germinating seeds.

The protein resides in the membrane. The catalysed reaction is (4-hydroxyphenyl)acetaldehyde + dopamine = (S)-norcoclaurine + H2O. Its pathway is alkaloid biosynthesis; (S)-reticuline biosynthesis. Activity doubles within 5 hours of elicitor treatment and continues to increase for at least 80 hours. Its function is as follows. Involved in the biosynthesis of (S)-coclaurine, the common precursor of all benzylisoquinoline alkaloids such as morphine, sanguinarine, codeine or papaverine. Condenses dopamine and 4-hydroxyphenylacetaldehyde. The protein is S-norcoclaurine synthase 1 of Papaver somniferum (Opium poppy).